The sequence spans 489 residues: Glutamyl-tRNA(Gln) amidotransferase subunit A (489 aa).

Catalysis depends on charge relay system residues lysine 77 and serine 152. Residue serine 176 is the Acyl-ester intermediate of the active site.

It belongs to the amidase family. GatA subfamily. In terms of assembly, heterotrimer of A, B and C subunits.

The enzyme catalyses L-glutamyl-tRNA(Gln) + L-glutamine + ATP + H2O = L-glutaminyl-tRNA(Gln) + L-glutamate + ADP + phosphate + H(+). In terms of biological role, allows the formation of correctly charged Gln-tRNA(Gln) through the transamidation of misacylated Glu-tRNA(Gln) in organisms which lack glutaminyl-tRNA synthetase. The reaction takes place in the presence of glutamine and ATP through an activated gamma-phospho-Glu-tRNA(Gln). The sequence is that of Glutamyl-tRNA(Gln) amidotransferase subunit A from Levilactobacillus brevis (strain ATCC 367 / BCRC 12310 / CIP 105137 / JCM 1170 / LMG 11437 / NCIMB 947 / NCTC 947) (Lactobacillus brevis).